The following is a 66-amino-acid chain: Sodium/potassium-transporting ATPase subunit gamma (66 aa).

The helical transmembrane segment at 29-46 (GGLIFAGLAFVVGLLILL) threads the bilayer.

It belongs to the FXYD family. Regulatory subunit of the sodium/potassium-transporting ATPase which is composed of a catalytic alpha subunit, an auxiliary non-catalytic beta subunit and an additional regulatory subunit. Highest levels expressed in the kidney and spleen. Restricted to the basolateral membrane in renal epithelial cells and varies in its level of expression along the nephron.

It is found in the membrane. In terms of biological role, may be involved in forming the receptor site for cardiac glycoside binding or may modulate the transport function of the sodium ATPase. This chain is Sodium/potassium-transporting ATPase subunit gamma (Fxyd2), found in Rattus norvegicus (Rat).